A 319-amino-acid chain; its full sequence is Ribosomal large subunit pseudouridine synthase C (319 aa).

The region spanning 20–83 is the S4 RNA-binding domain; it reads QRIDNFLRTQ…AEREEEAVSP (64 aa). The active site involves Asp-144.

This sequence belongs to the pseudouridine synthase RluA family.

It carries out the reaction uridine(955/2504/2580) in 23S rRNA = pseudouridine(955/2504/2580) in 23S rRNA. In terms of biological role, responsible for synthesis of pseudouridine from uracil at positions 955, 2504 and 2580 in 23S ribosomal RNA. The protein is Ribosomal large subunit pseudouridine synthase C of Escherichia coli (strain K12).